The sequence spans 540 residues: Medium/long-chain-fatty-acid--[acyl-carrier-protein] ligase FadD10 (540 aa).

Thr-177 contacts Mg(2+). The ATP site is built by Ile-226, Val-316, and Ser-320. Glu-321 serves as a coordination point for Mg(2+). Position 408 (Asp-408) interacts with ATP.

Belongs to the ATP-dependent AMP-binding enzyme family. In terms of assembly, homodimer. The cofactor is Mg(2+).

The protein resides in the cytoplasm. It catalyses the reaction a medium-chain fatty acid + holo-[ACP] + ATP = a medium-chain fatty acyl-[ACP] + AMP + diphosphate. The catalysed reaction is a medium-chain fatty acid + ATP + H(+) = a medium-chain fatty acyl-AMP + diphosphate. The enzyme catalyses a medium-chain fatty acyl-AMP + holo-[ACP] = a medium-chain fatty acyl-[ACP] + AMP + H(+). It carries out the reaction a long-chain fatty acid + holo-[ACP] + ATP = a long-chain fatty acyl-[ACP] + AMP + diphosphate. It catalyses the reaction a long-chain fatty acid + ATP + H(+) = a long-chain fatty acyl-AMP + diphosphate. The catalysed reaction is a long-chain fatty acyl-AMP + holo-[ACP] = a long-chain fatty acyl-[ACP] + AMP + H(+). The enzyme catalyses a (2E)-enoyl fatty acid + holo-[ACP] + ATP = a (2E)-enoyl-[ACP] + AMP + diphosphate. It carries out the reaction a (2E)-enoyl fatty acid + ATP + H(+) = a (2E)-2-fatty-enoyl-AMP + diphosphate. It catalyses the reaction a (2E)-2-fatty-enoyl-AMP + holo-[ACP] = a (2E)-enoyl-[ACP] + AMP + H(+). The catalysed reaction is a (3R)-3-isocyanyl-fatty acid + holo-[ACP] + ATP = a (3R)-3-isocyanyl-fatty acyl-[ACP] + AMP + diphosphate. The enzyme catalyses a (3R)-3-isocyanyl-fatty acid + ATP + H(+) = a (3R)-3-isocyanyl-fatty acyl-AMP + diphosphate. It carries out the reaction a (3R)-3-isocyanyl-fatty acyl-AMP + holo-[ACP] = a (3R)-3-isocyanyl-fatty acyl-[ACP] + AMP + H(+). Its pathway is lipid metabolism; fatty acid metabolism. In terms of biological role, acyl:acyl-carrier protein ligase involved in the biosynthesis of a unique class of isonitrile lipopeptides (INLPs) that seem to function as virulence factors in M.tuberculosis and to play a role in metal acquisition. Catalyzes the activation of medium/long-chain fatty acids as acyl-adenylates (acyl-AMP), which are then transferred to the phosphopantetheine arm of the acyl-carrier protein (ACP) MT0109. Acts twice during the INLP pathway, catalyzing the activation of a (2E)-enoyl fatty acid as well as the corresponding (3R)-3-isocyanyl-fatty acid as acyl-adenylates (acyl-AMP), and then the acyl transfer to the dedicated acyl-carrier protein MT0109. This Mycobacterium tuberculosis (strain CDC 1551 / Oshkosh) protein is Medium/long-chain-fatty-acid--[acyl-carrier-protein] ligase FadD10 (fadD10).